Here is a 382-residue protein sequence, read N- to C-terminus: Anhydro-N-acetylmuramic acid kinase (382 aa).

9–16 provides a ligand contact to ATP; it reads GTSLDGID.

This sequence belongs to the anhydro-N-acetylmuramic acid kinase family.

It carries out the reaction 1,6-anhydro-N-acetyl-beta-muramate + ATP + H2O = N-acetyl-D-muramate 6-phosphate + ADP + H(+). The protein operates within amino-sugar metabolism; 1,6-anhydro-N-acetylmuramate degradation. It functions in the pathway cell wall biogenesis; peptidoglycan recycling. Its function is as follows. Catalyzes the specific phosphorylation of 1,6-anhydro-N-acetylmuramic acid (anhMurNAc) with the simultaneous cleavage of the 1,6-anhydro ring, generating MurNAc-6-P. Is required for the utilization of anhMurNAc either imported from the medium or derived from its own cell wall murein, and thus plays a role in cell wall recycling. This Bacillus cereus (strain AH187) protein is Anhydro-N-acetylmuramic acid kinase.